Consider the following 171-residue polypeptide: UPF0312 protein SAB2563 (171 aa).

Belongs to the UPF0312 family.

This is UPF0312 protein SAB2563 from Staphylococcus aureus (strain bovine RF122 / ET3-1).